The primary structure comprises 128 residues: Fluoride-specific ion channel FluC (128 aa).

The next 4 helical transmembrane spans lie at leucine 2–leucine 22, tryptophan 37–isoleucine 57, alanine 65–phenylalanine 85, and alanine 101–alanine 121. 2 residues coordinate Na(+): glycine 77 and threonine 80.

It belongs to the fluoride channel Fluc/FEX (TC 1.A.43) family.

It is found in the cell inner membrane. It carries out the reaction fluoride(in) = fluoride(out). With respect to regulation, na(+) is not transported, but it plays an essential structural role and its presence is essential for fluoride channel function. Functionally, fluoride-specific ion channel. Important for reducing fluoride concentration in the cell, thus reducing its toxicity. The polypeptide is Fluoride-specific ion channel FluC (Bordetella bronchiseptica (strain ATCC BAA-588 / NCTC 13252 / RB50) (Alcaligenes bronchisepticus)).